The primary structure comprises 589 residues: Zinc finger protein 131 (589 aa).

The BTB domain maps to 34-98 (TDITLIVDGH…TYTAKLMIQG (65 aa)). The Nuclear localization signal 1 signature appears at 137–148 (TGKNEAKKRKIA). The segment covering 224–234 (GDRKGQIKEDG) has biased composition (basic and acidic residues). Residues 224-247 (GDRKGQIKEDGCPSDPTSKQEHMK) are disordered. 2 consecutive C2H2-type zinc fingers follow at residues 254–277 (FKCE…NCYH) and 294–316 (HVCQ…LRKH). Residues Lys-255 and Lys-261 each participate in a glycyl lysine isopeptide (Lys-Gly) (interchain with G-Cter in SUMO2) cross-link. The Nuclear localization signal 2 signature appears at 283 to 294 (VSKKQRTGKKIH). The C2H2-type 3; degenerate zinc finger occupies 322–347 (FECPNCHERFARNSTLKCHLTACQTG). C2H2-type zinc fingers lie at residues 358-380 (YECQ…LVIH) and 386-409 (NHCT…SDAH). Residues 539 to 583 (NQEERESSQADAAEAAREDHEDAEDLETKPTVDSEAEKAENEDRT) are compositionally biased toward basic and acidic residues. Positions 539–589 (NQEERESSQADAAEAAREDHEDAEDLETKPTVDSEAEKAENEDRTAMPVLE) are disordered. Lys-567 is covalently cross-linked (Glycyl lysine isopeptide (Lys-Gly) (interchain with G-Cter in SUMO)).

This sequence belongs to the krueppel C2H2-type zinc-finger protein family. Post-translationally, monosumoylated at Lys-567 by CBX4 and UHRF2. Sumoylation may potentiate ZNF131 inhibition of estrogen signaling. Sumoylation does not interfere with ubiquitination. In terms of processing, ubiquitinated.

Its subcellular location is the nucleus. Functionally, may be involved in transcriptional regulation as a repressor of ESR1/ER-alpha signaling. Plays a role during development and organogenesis as well as in the function of the adult central nervous system. This Pongo abelii (Sumatran orangutan) protein is Zinc finger protein 131 (ZNF131).